The following is a 158-amino-acid chain: Endoribonuclease YbeY (158 aa).

Zn(2+) contacts are provided by His124, His128, and His134.

It belongs to the endoribonuclease YbeY family. Zn(2+) serves as cofactor.

It is found in the cytoplasm. Single strand-specific metallo-endoribonuclease involved in late-stage 70S ribosome quality control and in maturation of the 3' terminus of the 16S rRNA. This Caldicellulosiruptor bescii (strain ATCC BAA-1888 / DSM 6725 / KCTC 15123 / Z-1320) (Anaerocellum thermophilum) protein is Endoribonuclease YbeY.